A 117-amino-acid chain; its full sequence is Immunoglobulin heavy variable 1-58 (117 aa).

Positions 1–19 (MDWIWRILFLVGAATGAHS) are cleaved as a signal peptide. The framework-1 stretch occupies residues 20–44 (QMQLVQSGPEVKKPGTSVKVSCKAS). Positions 20–117 (QMQLVQSGPE…EDTAVYYCAA (98 aa)) constitute an Ig-like domain. Cysteines 41 and 115 form a disulfide. A complementarity-determining-1 region spans residues 45 to 52 (GFTFTSSA). Positions 53 to 69 (VQWVRQARGQRLEWIGW) are framework-2. A complementarity-determining-2 region spans residues 70–77 (IVVGSGNT). Residues 78–115 (NYAQKFQERVTITRDMSTSTAYMELSSLRSEDTAVYYC) form a framework-3 region. The complementarity-determining-3 stretch occupies residues 116–117 (AA).

As to quaternary structure, immunoglobulins are composed of two identical heavy chains and two identical light chains; disulfide-linked.

It is found in the secreted. Its subcellular location is the cell membrane. Its function is as follows. V region of the variable domain of immunoglobulin heavy chains that participates in the antigen recognition. Immunoglobulins, also known as antibodies, are membrane-bound or secreted glycoproteins produced by B lymphocytes. In the recognition phase of humoral immunity, the membrane-bound immunoglobulins serve as receptors which, upon binding of a specific antigen, trigger the clonal expansion and differentiation of B lymphocytes into immunoglobulins-secreting plasma cells. Secreted immunoglobulins mediate the effector phase of humoral immunity, which results in the elimination of bound antigens. The antigen binding site is formed by the variable domain of one heavy chain, together with that of its associated light chain. Thus, each immunoglobulin has two antigen binding sites with remarkable affinity for a particular antigen. The variable domains are assembled by a process called V-(D)-J rearrangement and can then be subjected to somatic hypermutations which, after exposure to antigen and selection, allow affinity maturation for a particular antigen. This Homo sapiens (Human) protein is Immunoglobulin heavy variable 1-58.